The primary structure comprises 129 residues: uncharacterized protein (129 aa).

The first 21 residues, 1–21, serve as a signal peptide directing secretion; sequence MAQNKTIAVALLLATLVAVMG.

This is an uncharacterized protein from Oryza sativa subsp. japonica (Rice).